The primary structure comprises 200 residues: Holliday junction branch migration complex subunit RuvA (200 aa).

The segment at 1–63 is domain I; that stretch reads MIASVRGVVT…EDSLTLYGFA (63 aa). Residues 64–142 are domain II; that stretch reads DDNAKALFEL…PVPVGGDGAA (79 aa). Residues 143-151 form a flexible linker region; the sequence is GVTTGAWPE. The segment at 151–200 is domain III; it reads EQVRQALVGLGWTAGQAEQAVAAVAETVDGEVPPVPVLLRQAIRLLGRTR.

It belongs to the RuvA family. In terms of assembly, homotetramer. Forms an RuvA(8)-RuvB(12)-Holliday junction (HJ) complex. HJ DNA is sandwiched between 2 RuvA tetramers; dsDNA enters through RuvA and exits via RuvB. An RuvB hexamer assembles on each DNA strand where it exits the tetramer. Each RuvB hexamer is contacted by two RuvA subunits (via domain III) on 2 adjacent RuvB subunits; this complex drives branch migration. In the full resolvosome a probable DNA-RuvA(4)-RuvB(12)-RuvC(2) complex forms which resolves the HJ.

Its subcellular location is the cytoplasm. Functionally, the RuvA-RuvB-RuvC complex processes Holliday junction (HJ) DNA during genetic recombination and DNA repair, while the RuvA-RuvB complex plays an important role in the rescue of blocked DNA replication forks via replication fork reversal (RFR). RuvA specifically binds to HJ cruciform DNA, conferring on it an open structure. The RuvB hexamer acts as an ATP-dependent pump, pulling dsDNA into and through the RuvAB complex. HJ branch migration allows RuvC to scan DNA until it finds its consensus sequence, where it cleaves and resolves the cruciform DNA. The protein is Holliday junction branch migration complex subunit RuvA of Salinispora arenicola (strain CNS-205).